Reading from the N-terminus, the 454-residue chain is F-box/WD repeat-containing protein 2 (454 aa).

The region spanning 54–101 (RDFLKLLPLELSFYLLKWLDPQTLLTCCLVSKQWNKVISACTEVWQTA) is the F-box domain. WD repeat units lie at residues 139–175 (FETS…LWDV), 179–213 (QCVY…CWEW), 217–255 (ARTQ…VWAL), 259–306 (TCLN…IWPI), 313–352 (KCLK…QWDF), 364–403 (PEIA…RWPL), and 410–452 (KRGS…LWKE). Residue K298 is modified to N6-acetyllysine.

In terms of assembly, directly interacts with SKP1 and CUL1.

Its function is as follows. Substrate-recognition component of the SCF (SKP1-CUL1-F-box protein)-type E3 ubiquitin ligase complex. This Homo sapiens (Human) protein is F-box/WD repeat-containing protein 2 (FBXW2).